Reading from the N-terminus, the 487-residue chain is Multiple inositol polyphosphate phosphatase 1 (487 aa).

An N-terminal signal peptide occupies residues 1-30 (MLRAPGCLLRTSVAPAAALAAALLSSLARC). His-89 is a catalytic residue. 2 N-linked (GlcNAc...) asparagine glycosylation sites follow: Asn-242 and Asn-481. The Prevents secretion from ER signature appears at 484–487 (SDEL).

The protein belongs to the histidine acid phosphatase family. MINPP1 subfamily. Post-translationally, N-glycosylated. In terms of tissue distribution, widely expressed with highest levels in kidney, liver, cerebellum and placenta.

The protein localises to the endoplasmic reticulum lumen. The protein resides in the secreted. Its subcellular location is the cell membrane. The enzyme catalyses 1D-myo-inositol hexakisphosphate + H2O = 1D-myo-inositol 1,2,4,5,6-pentakisphosphate + phosphate. It carries out the reaction 1D-myo-inositol 1,2,4,5,6-pentakisphosphate + H2O = 1D-myo-inositol 1,2,5,6-tetrakisphosphate + phosphate. The catalysed reaction is 1D-myo-inositol 1,2,5,6-tetrakisphosphate + H2O = 1D-myo-inositol 1,2,6-trisphosphate + phosphate. It catalyses the reaction 1D-myo-inositol 1,2,6-trisphosphate + H2O = 1D-myo-inositol 1,2-bisphosphate + phosphate. The enzyme catalyses 1D-myo-inositol 1,2-bisphosphate + H2O = 1D-myo-inositol 2-phosphate + phosphate. It carries out the reaction 1D-myo-inositol hexakisphosphate + H2O = 1D-myo-inositol 1,2,3,5,6-pentakisphosphate + phosphate. The catalysed reaction is 1D-myo-inositol 1,2,3,5,6-pentakisphosphate + H2O = 1D-myo-inositol 1,2,3,6-tetrakisphosphate + phosphate. It catalyses the reaction 1D-myo-inositol 1,2,3,6-tetrakisphosphate + H2O = 1D-myo-inositol 1,2,3-trisphosphate + phosphate. The enzyme catalyses 1D-myo-inositol 1,2,3-trisphosphate + H2O = 1D-myo-inositol 2,3-bisphosphate + phosphate. It carries out the reaction 1D-myo-inositol 2,3-bisphosphate + H2O = 1D-myo-inositol 2-phosphate + phosphate. The catalysed reaction is 1D-myo-inositol 1,3,4,5,6-pentakisphosphate + H2O = 1D-myo-inositol 1,4,5,6-tetrakisphosphate + phosphate. It catalyses the reaction 1D-myo-inositol 1,4,5,6-tetrakisphosphate + H2O = 1D-myo-inositol 1,4,5-trisphosphate + phosphate. The enzyme catalyses (2R)-2,3-bisphosphoglycerate + H2O = (2R)-2-phosphoglycerate + phosphate. Multiple inositol polyphosphate phosphatase that hydrolyzes 1D-myo-inositol 1,3,4,5,6-pentakisphosphate (InsP5[2OH]) and 1D-myo-inositol hexakisphosphate (InsP6) to a range of less phosphorylated inositol phosphates. This regulates the availability of these various small molecule second messengers and metal chelators which control many aspects of cell physiology. Has a weak in vitro activity towards 1D-myo-inositol 1,4,5-trisphosphate which is unlikely to be physiologically relevant. By regulating intracellular inositol polyphosphates pools, which act as metal chelators, it may control the availability of intracellular calcium and iron, which are important for proper neuronal development and homeostasis. May have a dual substrate specificity, and function as a 2,3-bisphosphoglycerate 3-phosphatase hydrolyzing 2,3-bisphosphoglycerate to 2-phosphoglycerate. 2,3-bisphosphoglycerate (BPG) is formed as part of the Rapoport-Luebering glycolytic bypass and is a regulator of systemic oxygen homeostasis as the major allosteric effector of hemoglobin. In Homo sapiens (Human), this protein is Multiple inositol polyphosphate phosphatase 1.